The following is an 818-amino-acid chain: Fibrous sheath CABYR-binding protein (818 aa).

A disordered region spans residues Met1–Ile61. Residues Ser25, Ser57, and Ser182 each carry the phosphoserine modification. 2 disordered regions span residues Ser195–Thr727 and Leu773–Val805. 3 stretches are compositionally biased toward low complexity: residues Ser490–Glu511, Glu544–Glu560, and Ala697–Glu715. Residues Leu773 to Pro794 are compositionally biased toward basic and acidic residues.

Interacts with CABYR. Interacts with ROPN1 and ROPN1L; the interaction increases upon spermatozoa capacitation conditions. Phosphorylated by PKA upon spermatozoa capacitation conditions.

It is found in the cell projection. The protein localises to the cilium. The protein resides in the flagellum. Functionally, may be involved in the later stages of fibrous sheath biogenesis and spermatozoa capacitation. Inhibits ROPN1 and ROPN1L SUMOylation. Binds calcium. This Bos taurus (Bovine) protein is Fibrous sheath CABYR-binding protein.